The sequence spans 89 residues: Small ribosomal subunit protein uS15 (89 aa).

Belongs to the universal ribosomal protein uS15 family. As to quaternary structure, part of the 30S ribosomal subunit. Forms a bridge to the 50S subunit in the 70S ribosome, contacting the 23S rRNA.

In terms of biological role, one of the primary rRNA binding proteins, it binds directly to 16S rRNA where it helps nucleate assembly of the platform of the 30S subunit by binding and bridging several RNA helices of the 16S rRNA. Its function is as follows. Forms an intersubunit bridge (bridge B4) with the 23S rRNA of the 50S subunit in the ribosome. In Pseudomonas putida (Arthrobacter siderocapsulatus), this protein is Small ribosomal subunit protein uS15.